The sequence spans 199 residues: MLIKILYIIITYLCGSIPSAYIVAKANGKVDIRTVGSGNSGATNVFREIGKCAGVITLIADILKGFIPVYFATFIDNSFSYSVAVAAAAMVGHVFTIFLKFKGGKGVATGLGVFFALMRWPSLIALAIFGLAFVFSRYVSLGSICAVISLPLTSYFLGYSTEVVIFTFAITLLIIYRHRTNIKRLIERSENKLRIFKKK.

5 consecutive transmembrane segments (helical) span residues 3–23 (IKIL…AYIV), 55–75 (VITL…ATFI), 79–99 (FSYS…TIFL), 113–133 (VFFA…GLAF), and 155–175 (YFLG…LLII).

This sequence belongs to the PlsY family. Probably interacts with PlsX.

The protein localises to the cell inner membrane. The enzyme catalyses an acyl phosphate + sn-glycerol 3-phosphate = a 1-acyl-sn-glycero-3-phosphate + phosphate. Its pathway is lipid metabolism; phospholipid metabolism. Its function is as follows. Catalyzes the transfer of an acyl group from acyl-phosphate (acyl-PO(4)) to glycerol-3-phosphate (G3P) to form lysophosphatidic acid (LPA). This enzyme utilizes acyl-phosphate as fatty acyl donor, but not acyl-CoA or acyl-ACP. This chain is Glycerol-3-phosphate acyltransferase, found in Endomicrobium trichonymphae.